A 314-amino-acid chain; its full sequence is Olfactory receptor 5I1 (314 aa).

Residues 1-27 (MEFTDRNYTLVTEFILLGFPTRPELQI) are Extracellular-facing. N-linked (GlcNAc...) asparagine glycosylation is present at N7. The chain crosses the membrane as a helical span at residues 28–48 (VLFLMFLTLYAIILIGNIGLM). Residues 49–56 (LLIRIDPH) are Cytoplasmic-facing. Residues 57–77 (LQTPMYFFLSNLSFVDLCYFS) form a helical membrane-spanning segment. Over 78 to 101 (DIVPKMLVNFLSENKSISYYGCAL) the chain is Extracellular. Cysteines 99 and 191 form a disulfide. The chain crosses the membrane as a helical span at residues 102–122 (QFYFFCTFADTESFILAAMAY). At 123–141 (DRYVAICNPLLYTVVMSRG) the chain is on the cytoplasmic side. The chain crosses the membrane as a helical span at residues 142–162 (ICMRLIVLSYLGGNMSSLVHT). Over 163 to 198 (SFAFILKYCDKNVINHFFCDLPPLLKLSCTDTTINE) the chain is Extracellular. A helical transmembrane segment spans residues 199 to 219 (WLLSTYGSSVEIICFIIIIIS). At 220–239 (YFFILLSVLKIRSFSGRKKT) the chain is on the cytoplasmic side. Residues 240-260 (FSTCASHLTSVTIYQGTLLFI) form a helical membrane-spanning segment. Residues 261–273 (YSRPSYLYSPNTD) lie on the Extracellular side of the membrane. The chain crosses the membrane as a helical span at residues 274 to 294 (KIISVFYTIFIPVLNPLIYSL). The Cytoplasmic segment spans residues 295–314 (RNKDVKDAAEKVLRSKVDSS).

This sequence belongs to the G-protein coupled receptor 1 family.

It is found in the cell membrane. Its function is as follows. Odorant receptor. The protein is Olfactory receptor 5I1 (OR5I1) of Homo sapiens (Human).